The primary structure comprises 344 residues: L-rhamnose-proton symporter (344 aa).

A run of 10 helical transmembrane segments spans residues 4–24 (AITM…CFYA), 38–58 (WSVG…ALLL), 68–88 (FSLS…IGNI), 101–121 (MGIG…TPII), 137–157 (TLLG…AGQL), 175–195 (LVLA…MNAA), 214–234 (LPSY…FCFI), 259–279 (VLLS…YAWG), 290–310 (ISWM…GLVL), and 323–343 (VLSL…IGMA).

The protein belongs to the L-rhamnose transporter (TC 2.A.7.6) family.

It localises to the cell inner membrane. The catalysed reaction is L-rhamnopyranose(in) + H(+)(in) = L-rhamnopyranose(out) + H(+)(out). Its function is as follows. Uptake of L-rhamnose across the cytoplasmic membrane with the concomitant transport of protons into the cell (symport system). In Escherichia coli (strain 55989 / EAEC), this protein is L-rhamnose-proton symporter.